A 200-amino-acid polypeptide reads, in one-letter code: dTTP/UTP pyrophosphatase (200 aa).

Aspartate 81 serves as the catalytic Proton acceptor.

The protein belongs to the Maf family. YhdE subfamily. The cofactor is a divalent metal cation.

The protein resides in the cytoplasm. It carries out the reaction dTTP + H2O = dTMP + diphosphate + H(+). The enzyme catalyses UTP + H2O = UMP + diphosphate + H(+). Nucleoside triphosphate pyrophosphatase that hydrolyzes dTTP and UTP. May have a dual role in cell division arrest and in preventing the incorporation of modified nucleotides into cellular nucleic acids. This is dTTP/UTP pyrophosphatase from Cupriavidus pinatubonensis (strain JMP 134 / LMG 1197) (Cupriavidus necator (strain JMP 134)).